Reading from the N-terminus, the 347-residue chain is Dihydroorotate dehydrogenase (quinone) (347 aa).

FMN-binding positions include 62–66 (AGLDK) and T86. K66 contributes to the substrate binding site. 111–115 (NRMGF) serves as a coordination point for substrate. FMN is bound by residues N142 and N175. N175 contributes to the substrate binding site. The active-site Nucleophile is S178. Substrate is bound at residue N180. Residues K220 and T248 each coordinate FMN. 249 to 250 (NT) provides a ligand contact to substrate. FMN-binding positions include G271, G300, and 321–322 (YS).

The protein belongs to the dihydroorotate dehydrogenase family. Type 2 subfamily. As to quaternary structure, monomer. FMN is required as a cofactor.

It localises to the cell membrane. It catalyses the reaction (S)-dihydroorotate + a quinone = orotate + a quinol. Its pathway is pyrimidine metabolism; UMP biosynthesis via de novo pathway; orotate from (S)-dihydroorotate (quinone route): step 1/1. Its function is as follows. Catalyzes the conversion of dihydroorotate to orotate with quinone as electron acceptor. In Dechloromonas aromatica (strain RCB), this protein is Dihydroorotate dehydrogenase (quinone).